Here is a 507-residue protein sequence, read N- to C-terminus: Maturase K (507 aa).

This sequence belongs to the intron maturase 2 family. MatK subfamily.

Its subcellular location is the plastid. The protein localises to the chloroplast. In terms of biological role, usually encoded in the trnK tRNA gene intron. Probably assists in splicing its own and other chloroplast group II introns. This Cananga odorata (Ylang-ylang tree) protein is Maturase K.